Here is a 176-residue protein sequence, read N- to C-terminus: uncharacterized protein (176 aa).

Positions 1–20 are cleaved as a signal peptide; sequence MIKKISIILITLFIIQLTKS. The segment at 26–46 is disordered; that stretch reads NNNNNNNNNNNNNNNNNNNNN. The N-linked (GlcNAc...) asparagine glycan is linked to Asn120.

Belongs to the Dictyostelium gerABC family.

The protein resides in the secreted. This is an uncharacterized protein from Dictyostelium discoideum (Social amoeba).